A 38-amino-acid chain; its full sequence is Conotoxin FVIA (38 aa).

Residues 1 to 12 (ILSLSLLDRSTR) constitute a propeptide that is removed on maturation. Disulfide bonds link Cys-13–Cys-28, Cys-20–Cys-32, and Cys-27–Cys-37. The residue at position 37 (Cys-37) is a Cysteine amide.

It belongs to the conotoxin O1 superfamily. In terms of tissue distribution, expressed by the venom duct.

Its subcellular location is the secreted. In terms of biological role, omega-conotoxins act at presynaptic membranes, they bind and block voltage-gated calcium channels (Cav). This peptide reversibly and selectively inhibits Cav2.2/CACNA1B (IC(50)=11.5 nM) voltage-gated calcium channels. Channel time recovery after toxin exposure is short (about 50 seconds). In vivo, it effectively and dose-dependently reduces nociceptive behavior in the formalin test and in neuropathic pain models, and reduces mechanical and thermal allodynia in the tail nerve injury rat model. It also shows significant analgesic effects on writhing in mouse neurotransmitter- and cytokine-induced pain models, though it has no effect on acute thermal pain and interferon-gamma-induced pain. It also depresses blood pressure immediately after administration, but pressure recovers relatively quickly and completely. This Conus fulmen (Thunderbolt cone) protein is Conotoxin FVIA.